The sequence spans 290 residues: Picrinine-N-methytransferase TMT4 (290 aa).

The tract at residues 71-80 is SAM motif I; the sequence is MLDVGCGIGG. Positions 133-139 match the Vacuolar targeting signal motif; sequence DGTFDVV. The segment at 134–142 is SAM motif II; sequence GTFDVVFTI. Positions 161 to 170 are SAM motif III; sequence VAAPGAAIVI.

This sequence belongs to the class I-like SAM-binding methyltransferase superfamily. gTMT family. Homodimer.

The protein localises to the vacuole membrane. It carries out the reaction picrinine + S-adenosyl-L-methionine = ervincine + S-adenosyl-L-homocysteine + H(+). It participates in alkaloid biosynthesis; vindoline biosynthesis. Functionally, S-adenosyl-L-methionine-dependent N-methyltransferase involved in the biosynthesis of biologically active monoterpenoid indole alkaloids (MIAs) natural products including vindoline. Catalyzes the conversion of picrinine to N-methylpicrinine (ervincine). The protein is Picrinine-N-methytransferase TMT4 of Catharanthus roseus (Madagascar periwinkle).